A 754-amino-acid polypeptide reads, in one-letter code: 5-methyltetrahydropteroyltriglutamate--homocysteine methyltransferase (754 aa).

Residues 17–20 (RELK) and lysine 117 each bind 5-methyltetrahydropteroyltri-L-glutamate. Residues 431–433 (IGS) and glutamate 484 contribute to the L-homocysteine site. Residues 431–433 (IGS) and glutamate 484 each bind L-methionine. 5-methyltetrahydropteroyltri-L-glutamate-binding positions include 515 to 516 (RC) and tryptophan 561. Aspartate 599 provides a ligand contact to L-homocysteine. Position 599 (aspartate 599) interacts with L-methionine. Position 605 (glutamate 605) interacts with 5-methyltetrahydropteroyltri-L-glutamate. Residues histidine 641, cysteine 643, and glutamate 665 each coordinate Zn(2+). The Proton donor role is filled by histidine 694. Cysteine 726 contributes to the Zn(2+) binding site.

This sequence belongs to the vitamin-B12 independent methionine synthase family. It depends on Zn(2+) as a cofactor.

It catalyses the reaction 5-methyltetrahydropteroyltri-L-glutamate + L-homocysteine = tetrahydropteroyltri-L-glutamate + L-methionine. It functions in the pathway amino-acid biosynthesis; L-methionine biosynthesis via de novo pathway; L-methionine from L-homocysteine (MetE route): step 1/1. Catalyzes the transfer of a methyl group from 5-methyltetrahydrofolate to homocysteine resulting in methionine formation. In Salmonella typhimurium (strain LT2 / SGSC1412 / ATCC 700720), this protein is 5-methyltetrahydropteroyltriglutamate--homocysteine methyltransferase.